The sequence spans 452 residues: Probable splicing factor, arginine/serine-rich 7 (452 aa).

RRM domains lie at 10-91 and 163-240; these read KILH…YPNP and RTVY…HSRV. The segment at 258 to 452 is disordered; the sequence is EEAIRMGRNG…GNGDVVMASE (195 aa). Over residues 259-272 the composition is skewed to basic and acidic residues; that stretch reads EAIRMGRNGDDRDR. Over residues 273 to 290 the composition is skewed to basic residues; sequence RRSRSPRRRRSPSPRRRR. The span at 291–305 shows a compositional bias: basic and acidic residues; sequence DSRDRDRDRDRDRRR. Basic residues-rich tracts occupy residues 323 to 335, 345 to 360, and 370 to 382; these read KRSR…RRSR, KRSR…KSRD, and SKDR…RSRS. Positions 383 to 421 are enriched in basic and acidic residues; sequence RSPEKRRDKEDRKTEKKENENESSLREKLLEKKAARKDS.

Belongs to the splicing factor SR family. Extensively phosphorylated on serine residues in the RS domain.

It is found in the nucleus. This chain is Probable splicing factor, arginine/serine-rich 7 (rsp-7), found in Caenorhabditis elegans.